A 556-amino-acid chain; its full sequence is Formate--tetrahydrofolate ligase (556 aa).

Thr65–Ser72 contributes to the ATP binding site.

The protein belongs to the formate--tetrahydrofolate ligase family.

The catalysed reaction is (6S)-5,6,7,8-tetrahydrofolate + formate + ATP = (6R)-10-formyltetrahydrofolate + ADP + phosphate. Its pathway is one-carbon metabolism; tetrahydrofolate interconversion. The protein is Formate--tetrahydrofolate ligase of Streptococcus pneumoniae serotype 19F (strain G54).